Consider the following 749-residue polypeptide: MQTSETGSDTGSTVTLQTSVASQAAVPTQVVQQVPVQQQVQQVQTVQQVQHVYPAQVQYVEGSDTVYTNGAIRTTTYPYTETQMYSQNTGGNYFDTQGSSAQVTTVVSSHSMVGTGGIQMGVTGGQLISSSGGTYLIGNSMENSGHSVTHTTRASPATIEMAIETLQKSDGLSTHRSSLLNSHLQWLLDNYETAEGVSLPRSTLYDHYLRHCQEHKLDPVNAASFGKLIRSIFMGLRTRRLGTRGNSKYHYYGIRVKPDSPLNRLQEDMQYMAMRQQPMQQKQRYKPMQKVDGVADGFTGSGQQTGTSVEQTVIAQSQHHQQFLDASRALPEFGEVEISSLPDGTTFEDIKSLQSLYREHCEAILDVVVNLQFSLIEKLWQTFWRYSPSTPTDGTTITESSNLSEIESRLPKAKLITLCKHESILKWMCNCDHGMYQALVEILIPDVLRPIPSALTQAIRNFAKSLEGWLSNAMNNIPQRMIQTKVAAVSAFAQTLRRYTSLNHLAQAARAVLQNTSQINQMLNDLNRVDFANVQEQASWVCQCDDNMVQRLETDFKMTLQQQSTLEQWAAWLDNVMMQALKPYEGRPSFPKAARQFLLKWSFYSSMVIRDLTLRSAASFGSFHLIRLLYDEYMFYLVEHRVAQATGETPIAVMGEFGDLNAVSPGNLDKDEGSEVESEMDEELDDSSEPQAKREKTELSQAFPVGCMQPVLETGVQPSLLNPIHSEHIVTSTQTIRQCSATGNTYTAV.

The segment at residues 183–258 (HLQWLLDNYE…YHYYGIRVKP (76 aa)) is a DNA-binding region (RFX-type winged-helix). A disordered region spans residues 663–699 (VSPGNLDKDEGSEVESEMDEELDDSSEPQAKREKTEL). Residues 674 to 688 (SEVESEMDEELDDSS) show a composition bias toward acidic residues.

Belongs to the RFX family. Heterodimer; heterodimerizes with RFX1 and RFX2, and RFX6.

The protein resides in the nucleus. In terms of biological role, transcription factor required for ciliogenesis and islet cell differentiation during endocrine pancreas development. Essential for the differentiation of nodal monocilia and left-right asymmetry specification during embryogenesis. Required for the biogenesis of motile cilia by governing growth and beating efficiency of motile cells. Also required for ciliated ependymal cell differentiation. Regulates the expression of genes involved in ciliary assembly (DYNC2LI1, FOXJ1 and BBS4) and genes involved in ciliary motility (DNAH11, DNAH9 and DNAH5). Together with RFX6, participates in the differentiation of 4 of the 5 islet cell types during endocrine pancreas development, with the exception of pancreatic PP (polypeptide-producing) cells. Regulates transcription by forming a heterodimer with another RFX protein and binding to the X-box in the promoter of target genes. Represses transcription of MAP1A in non-neuronal cells but not in neuronal cells. This chain is Transcription factor RFX3 (RFX3), found in Macaca fascicularis (Crab-eating macaque).